Consider the following 477-residue polypeptide: Pyruvate kinase (477 aa).

Arginine 34 is a substrate binding site. Asparagine 36, aspartate 64, and threonine 65 together coordinate K(+). 36–39 (NTAH) serves as a coordination point for ATP. Positions 71 and 150 each coordinate ATP. Glutamate 216 provides a ligand contact to Mg(2+). Residues glycine 239, aspartate 240, and threonine 272 each coordinate substrate. Mg(2+) is bound at residue aspartate 240.

It belongs to the pyruvate kinase family. Homotetramer. Mg(2+) is required as a cofactor. K(+) serves as cofactor.

It catalyses the reaction pyruvate + ATP = phosphoenolpyruvate + ADP + H(+). It functions in the pathway carbohydrate degradation; glycolysis; pyruvate from D-glyceraldehyde 3-phosphate: step 5/5. The protein is Pyruvate kinase (pyk) of Borreliella burgdorferi (strain ATCC 35210 / DSM 4680 / CIP 102532 / B31) (Borrelia burgdorferi).